Here is a 247-residue protein sequence, read N- to C-terminus: Small ribosomal subunit protein uS2 (247 aa).

It belongs to the universal ribosomal protein uS2 family.

The protein is Small ribosomal subunit protein uS2 of Ralstonia nicotianae (strain ATCC BAA-1114 / GMI1000) (Ralstonia solanacearum).